Here is a 318-residue protein sequence, read N- to C-terminus: DNA repair nuclease/redox regulator APEX1 (318 aa).

The necessary for interaction with YBX1, binding to RNA, association together with NPM1 to rRNA, endoribonuclease activity on abasic RNA and localization in the nucleoli stretch occupies residues 1-33; that stretch reads MPKRGKKGAVAEDGDELKTEPEAKKSKTAAKKN. A disordered region spans residues 1 to 60; it reads MPKRGKKGAVAEDGDELKTEPEAKKSKTAAKKNDKEAAGEGPALYEDPPDQKTSPSGKPA. N6-acetyllysine; by EP300 is present on residues K6 and K7. The Nuclear localization signal (NLS) signature appears at 8–13; sequence GAVAED. Basic and acidic residues predominate over residues 16–38; that stretch reads ELKTEPEAKKSKTAAKKNDKEAA. Residues 23–33 form a necessary for interaction with NPM1 and for efficient rRNA binding region; it reads AKKSKTAAKKN. Residues K27, K31, K32, and K35 each carry the N6-acetyllysine modification. Residue S54 is modified to Phosphoserine. The short motif at 64–80 is the Nuclear export signal (NES) element; sequence ICSWNVDGLRAWIKKKG. C65 is subject to S-nitrosocysteine; alternate. A disulfide bridge links C65 with C93. D70 provides a ligand contact to Mg(2+). C93 is modified (S-nitrosocysteine; alternate). Residue E96 participates in Mg(2+) binding. The active site involves Y171. Position 197 is an N6-acetyllysine (K197). Mg(2+)-binding residues include D210 and N212. D210 functions as the Proton donor/acceptor in the catalytic mechanism. T233 is subject to Phosphothreonine; by CDK5. Residues 289–318 form a mitochondrial targeting sequence (MTS) region; the sequence is HSLLPALCDSKIRSKALGSDHCPITLYLAL. D308 contacts Mg(2+). Position 310 is an S-nitrosocysteine (C310).

The protein belongs to the DNA repair enzymes AP/ExoA family. As to quaternary structure, monomer. Homodimer; disulfide-linked. Component of the SET complex, composed of at least APEX1, SET, ANP32A, HMGB2, NME1 and TREX1. Associates with the dimer XRCC5/XRCC6 in a DNA-dependent manner. Interacts with SIRT1; the interaction is increased in the context of genotoxic stress. Interacts with HDAC1, HDAC2 and HDAC3; the interactions are not dependent on the APEX1 acetylation status. Interacts with XRCC1; the interaction is induced by SIRT1 and increased with the APEX1 acetylated form. Interacts with NPM1 (via N-terminal domain); the interaction is RNA-dependent and decreases in hydrogen peroxide-damaged cells. Interacts (via N-terminus) with YBX1 (via C-terminus); the interaction is increased in presence of APEX1 acetylated at Lys-6 and Lys-7. Interacts with HNRNPL; the interaction is DNA-dependent. Interacts (via N-terminus) with KPNA1 and KPNA2. Interacts with TXN; the interaction stimulates the FOS/JUN AP-1 complex DNA-binding activity in a redox-dependent manner. Interacts with GZMA, KRT8, MDM2, POLB, PRDX6, PRPF19, RPLP0, TOMM20 and WDR77. Binds to CDK5. The cofactor is Mg(2+). Mn(2+) is required as a cofactor. Phosphorylated. Phosphorylation by kinase PKC or casein kinase CK2 results in enhanced redox activity that stimulates binding of the FOS/JUN AP-1 complex to its cognate binding site. AP-endodeoxyribonuclease activity is not affected by CK2-mediated phosphorylation. Phosphorylation of Thr-233 by CDK5 in response to MPP(+)/MPTP (1-methyl-4-phenylpyridinium) reduces AP-endodeoxyribonuclease activity resulting in accumulation of DNA damage and contributing to neuronal death. In terms of processing, acetylated on Lys-6 and Lys-7. Acetylation is increased by the transcriptional coactivator EP300 acetyltransferase, genotoxic agents like H(2)O(2) and methyl methanesulfonate (MMS). Acetylation increases its binding affinity to the negative calcium response element (nCaRE) DNA promoter. The acetylated form induces a stronger binding of YBX1 to the Y-box sequence in the MDR1 promoter than the unacetylated form. Deacetylated on lysines. Lys-6 and Lys-7 are deacetylated by SIRT1. Post-translationally, cleaved at Lys-31 by granzyme A to create the mitochondrial form; leading in reduction of binding to DNA, AP endodeoxyribonuclease activity, redox activation of transcription factors and to enhanced cell death. Cleaved by granzyme K; leading to intracellular ROS accumulation and enhanced cell death after oxidative stress. Cys-69 and Cys-93 are nitrosylated in response to nitric oxide (NO) and lead to the exposure of the nuclear export signal (NES). In terms of processing, ubiquitinated by MDM2; leading to translocation to the cytoplasm and proteasomal degradation.

It localises to the nucleus. Its subcellular location is the nucleolus. It is found in the nucleus speckle. The protein resides in the endoplasmic reticulum. The protein localises to the cytoplasm. It localises to the mitochondrion. It carries out the reaction Exonucleolytic cleavage in the 3'- to 5'-direction to yield nucleoside 5'-phosphates.. NPM1 stimulates endodeoxyribonuclease activity on double-stranded DNA with AP sites, but inhibits endoribonuclease activity on single-stranded RNA containing AP sites. In terms of biological role, multifunctional protein that plays a central role in the cellular response to oxidative stress. The two major activities of APEX1 are DNA repair and redox regulation of transcriptional factors. Functions as an apurinic/apyrimidinic (AP) endodeoxyribonuclease in the DNA base excision repair (BER) pathway of DNA lesions induced by oxidative and alkylating agents. Initiates repair of AP sites in DNA by catalyzing hydrolytic incision of the phosphodiester backbone immediately adjacent to the damage, generating a single-strand break with 5'-deoxyribose phosphate and 3'-hydroxyl ends. Also incises at AP sites in the DNA strand of DNA/RNA hybrids, single-stranded DNA regions of R-loop structures, and single-stranded RNA molecules. Has 3'-5' exoribonuclease activity on mismatched deoxyribonucleotides at the 3' termini of nicked or gapped DNA molecules during short-patch BER. Possesses DNA 3' phosphodiesterase activity capable of removing lesions (such as phosphoglycolate) blocking the 3' side of DNA strand breaks. May also play a role in the epigenetic regulation of gene expression by participating in DNA demethylation. Acts as a loading factor for POLB onto non-incised AP sites in DNA and stimulates the 5'-terminal deoxyribose 5'-phosphate (dRp) excision activity of POLB. Plays a role in the protection from granzyme-mediated cellular repair leading to cell death. Also involved in the DNA cleavage step of class switch recombination (CSR). On the other hand, APEX1 also exerts reversible nuclear redox activity to regulate DNA binding affinity and transcriptional activity of transcriptional factors by controlling the redox status of their DNA-binding domain, such as the FOS/JUN AP-1 complex after exposure to IR. Involved in calcium-dependent down-regulation of parathyroid hormone (PTH) expression by binding to negative calcium response elements (nCaREs). Together with HNRNPL or the dimer XRCC5/XRCC6, associates with nCaRE, acting as an activator of transcriptional repression. Stimulates the YBX1-mediated MDR1 promoter activity, when acetylated at Lys-6 and Lys-7, leading to drug resistance. Also acts as an endoribonuclease involved in the control of single-stranded RNA metabolism. Plays a role in regulating MYC mRNA turnover by preferentially cleaving in between UA and CA dinucleotides of the MYC coding region determinant (CRD). In association with NMD1, plays a role in the rRNA quality control process during cell cycle progression. Associates, together with YBX1, on the MDR1 promoter. Together with NPM1, associates with rRNA. Binds DNA and RNA. The polypeptide is DNA repair nuclease/redox regulator APEX1 (APEX1) (Gorilla gorilla gorilla (Western lowland gorilla)).